The following is an 89-amino-acid chain: Small ribosomal subunit protein uS19 (89 aa).

Belongs to the universal ribosomal protein uS19 family.

Its function is as follows. Protein S19 forms a complex with S13 that binds strongly to the 16S ribosomal RNA. In Xanthomonas campestris pv. campestris (strain 8004), this protein is Small ribosomal subunit protein uS19.